Reading from the N-terminus, the 388-residue chain is LL-diaminopimelate aminotransferase (388 aa).

Residues Tyr-16 and Gly-41 each contribute to the substrate site. Pyridoxal 5'-phosphate contacts are provided by residues Tyr-70, 104–105, Tyr-129, Asn-179, Tyr-210, and 239–241; these read SK and SLS. Positions 105, 129, and 179 each coordinate substrate. The residue at position 242 (Lys-242) is an N6-(pyridoxal phosphate)lysine. Arg-250 lines the pyridoxal 5'-phosphate pocket. Arg-368 lines the substrate pocket.

It belongs to the class-I pyridoxal-phosphate-dependent aminotransferase family. LL-diaminopimelate aminotransferase subfamily. As to quaternary structure, homodimer. Pyridoxal 5'-phosphate is required as a cofactor.

It carries out the reaction (2S,6S)-2,6-diaminopimelate + 2-oxoglutarate = (S)-2,3,4,5-tetrahydrodipicolinate + L-glutamate + H2O + H(+). Its pathway is amino-acid biosynthesis; L-lysine biosynthesis via DAP pathway; LL-2,6-diaminopimelate from (S)-tetrahydrodipicolinate (aminotransferase route): step 1/1. Involved in the synthesis of meso-diaminopimelate (m-DAP or DL-DAP), required for both lysine and peptidoglycan biosynthesis. Catalyzes the direct conversion of tetrahydrodipicolinate to LL-diaminopimelate. The chain is LL-diaminopimelate aminotransferase from Maridesulfovibrio salexigens (strain ATCC 14822 / DSM 2638 / NCIMB 8403 / VKM B-1763) (Desulfovibrio salexigens).